Here is a 613-residue protein sequence, read N- to C-terminus: Dihydroxy-acid dehydratase 3 (613 aa).

Asp-81 is a Mg(2+) binding site. Position 122 (Cys-122) interacts with [2Fe-2S] cluster. 2 residues coordinate Mg(2+): Asp-123 and Lys-124. Lys-124 bears the N6-carboxylysine mark. [2Fe-2S] cluster is bound at residue Cys-197. Residue Glu-493 participates in Mg(2+) binding. The active-site Proton acceptor is Ser-519.

The protein belongs to the IlvD/Edd family. Homodimer. Requires [2Fe-2S] cluster as cofactor. The cofactor is Mg(2+).

The enzyme catalyses (2R)-2,3-dihydroxy-3-methylbutanoate = 3-methyl-2-oxobutanoate + H2O. It carries out the reaction (2R,3R)-2,3-dihydroxy-3-methylpentanoate = (S)-3-methyl-2-oxopentanoate + H2O. Its pathway is amino-acid biosynthesis; L-isoleucine biosynthesis; L-isoleucine from 2-oxobutanoate: step 3/4. It participates in amino-acid biosynthesis; L-valine biosynthesis; L-valine from pyruvate: step 3/4. Functionally, functions in the biosynthesis of branched-chain amino acids. Catalyzes the dehydration of (2R,3R)-2,3-dihydroxy-3-methylpentanoate (2,3-dihydroxy-3-methylvalerate) into 2-oxo-3-methylpentanoate (2-oxo-3-methylvalerate) and of (2R)-2,3-dihydroxy-3-methylbutanoate (2,3-dihydroxyisovalerate) into 2-oxo-3-methylbutanoate (2-oxoisovalerate), the penultimate precursor to L-isoleucine and L-valine, respectively. This is Dihydroxy-acid dehydratase 3 from Nocardia farcinica (strain IFM 10152).